The sequence spans 612 residues: Transcription factor ffsR (612 aa).

Polar residues predominate over residues 1–12 (MDTLTAPTTQSE). Residues 1-21 (MDTLTAPTTQSEQPPPPLTAS) form a disordered region. The zn(2)-C6 fungal-type DNA-binding region spans 28 to 60 (CDRCRSHKLRCNRDLMTSTNSPCQRCRKARVKC). The span at 73-82 (EELKNGENVH) shows a compositional bias: basic and acidic residues. Disordered regions lie at residues 73-130 (EELK…SMSG), 154-249 (DGST…VTSS), and 451-470 (GQGPPMGPSQGSSSRSTTTN). 3 stretches are compositionally biased toward polar residues: residues 92 to 103 (SHRTASTPSNHA), 154 to 169 (DGSTSGLPMGSHTNGS), and 238 to 249 (LTQQHPAGVTSS). Residues 458 to 470 (PSQGSSSRSTTTN) are compositionally biased toward low complexity.

The protein resides in the nucleus. Functionally, transcription factor that specifically regulates the expression of the gene cluster that mediates the biosynthesis of the cytotoxic leucine-containing cytochalasans, including aspochalasin C, aspochalasin E, TMC-169, flavichalasine F, aspergillin PZ, aspochalasin M and flavichalasine G. This chain is Transcription factor ffsR, found in Aspergillus flavipes.